The sequence spans 86 residues: Superoxide dismutase [Cu-Zn] (86 aa).

The disordered stretch occupies residues 1–26 (AKEKGGKLTAGLAAGGHWNPNKAPHH). Over residues 7–16 (KLTAGLAAGG) the composition is skewed to low complexity. A Cu cation-binding site is contributed by histidine 17. Residues histidine 17, histidine 26, histidine 35, and aspartate 38 each contribute to the Zn(2+) site. Histidine 73 is a Cu cation binding site.

Belongs to the Cu-Zn superoxide dismutase family. As to quaternary structure, homodimer. The cofactor is Cu cation. It depends on Zn(2+) as a cofactor.

The protein localises to the periplasm. It carries out the reaction 2 superoxide + 2 H(+) = H2O2 + O2. Destroys radicals which are normally produced within the cells and which are toxic to biological systems. The protein is Superoxide dismutase [Cu-Zn] (sodC) of Mannheimia haemolytica (Pasteurella haemolytica).